The chain runs to 238 residues: Ribosomal RNA small subunit methyltransferase G (238 aa).

Residues Gly99, Leu104, 122–124 (DAT), 150–151 (VE), and Arg164 contribute to the S-adenosyl-L-methionine site.

It belongs to the methyltransferase superfamily. RNA methyltransferase RsmG family.

It is found in the cytoplasm. Specifically methylates the N7 position of a guanine in 16S rRNA. The polypeptide is Ribosomal RNA small subunit methyltransferase G (Chlorobium luteolum (strain DSM 273 / BCRC 81028 / 2530) (Pelodictyon luteolum)).